The sequence spans 351 residues: DNA polymerase IV (351 aa).

One can recognise a UmuC domain in the interval 3 to 187 (ILFVDFDYFF…IDIDEVPGVG (185 aa)). Positions 7 and 105 each coordinate Mg(2+). Glu106 is a catalytic residue.

Belongs to the DNA polymerase type-Y family. The cofactor is Mg(2+).

The catalysed reaction is DNA(n) + a 2'-deoxyribonucleoside 5'-triphosphate = DNA(n+1) + diphosphate. Poorly processive, error-prone DNA polymerase involved in untargeted mutagenesis. Copies undamaged DNA at stalled replication forks, which arise in vivo from mismatched or misaligned primer ends. These misaligned primers can be extended by PolIV. Exhibits no 3'-5' exonuclease (proofreading) activity. May be involved in translesional synthesis. The protein is DNA polymerase IV of Sulfurisphaera tokodaii (strain DSM 16993 / JCM 10545 / NBRC 100140 / 7) (Sulfolobus tokodaii).